The sequence spans 1236 residues: ABC transporter B family member 9 (1236 aa).

Residues 33 to 320 form the ABC transmembrane type-1 1 domain; the sequence is MTVGTIAAAG…TSPSLNAFAA (288 aa). Helical transmembrane passes span 38–58, 80–100, 158–178, 179–199, 257–277, and 288–308; these read IAAA…GQLI, FIYL…CWMV, QLLC…PLLA, GVLC…SLIM, ISGF…GLAV, and GYNG…GMSL. Positions 355 to 591 constitute an ABC transporter 1 domain; it reads IELKDVYFRY…PEGAYSQLVR (237 aa). ATP is bound at residue 390–397; sequence GQSGSGKS. N542 is a glycosylation site (N-linked (GlcNAc...) asparagine). Residues 593 to 616 form a disordered region; that stretch reads QEGSKEEATESERPETSLDVERSG. Basic and acidic residues predominate over residues 594-616; sequence EGSKEEATESERPETSLDVERSG. N-linked (GlcNAc...) asparagine glycosylation is found at N631 and N653. 6 helical membrane passes run 685 to 705, 725 to 745, 785 to 805, 806 to 826, 902 to 922, and 927 to 947; these read VLVL…IFGL, SHFW…MIPV, SLVG…TTGL, IIAF…SPFI, FSFF…AGLI, and ATFG…IGVS. An ABC transmembrane type-1 2 domain is found at 686–958; it reads LVLGSIAAMV…TSAMAPDSNK (273 aa). The region spanning 993-1230 is the ABC transporter 2 domain; sequence IEFRHVSFRY…SGGAYASLVT (238 aa). 1028–1035 serves as a coordination point for ATP; it reads GESGSGKS. Residues N1082 and N1181 are each glycosylated (N-linked (GlcNAc...) asparagine).

This sequence belongs to the ABC transporter superfamily. ABCB family. Multidrug resistance exporter (TC 3.A.1.201) subfamily.

It localises to the membrane. In Arabidopsis thaliana (Mouse-ear cress), this protein is ABC transporter B family member 9 (ABCB9).